A 118-amino-acid polypeptide reads, in one-letter code: Light-harvesting protein B-800/850 gamma chain (118 aa).

Seems to be required for the LH-II stabilization. The sequence is that of Light-harvesting protein B-800/850 gamma chain (pucE) from Rhodobacter capsulatus (Rhodopseudomonas capsulata).